A 188-amino-acid polypeptide reads, in one-letter code: PRA1 family protein 3 (188 aa).

N-acetylmethionine is present on methionine 1. Residues methionine 1 to arginine 35 lie on the Cytoplasmic side of the membrane. 2 consecutive transmembrane segments (helical) span residues valine 36 to serine 56 and valine 57 to phenylalanine 77. Residues threonine 78–leucine 93 are Cytoplasmic-facing. Transmembrane regions (helical) follow at residues lysine 94–serine 114 and methionine 115–isoleucine 135. A required for homodimer formation and heterodimer formation with ARL6IP1 region spans residues methionine 103–glycine 117. Residues histidine 136–glutamate 188 are Cytoplasmic-facing. The interval histidine 136–glutamate 188 is targeting to endoplasmic reticulum membrane.

Belongs to the PRA1 family. As to quaternary structure, homodimer. Heterodimer with ARL6IP1. Forms multimers. Interacts with ARL6. Interacts with prenylated RAB1A and RAB3A. Interacts with SLC1A1/EAAC1. Interacts with RTN2 (via first transmembrane domain). Does not interact with VAMP1, VAMP2 or VAMP3.

Its subcellular location is the endoplasmic reticulum membrane. It is found in the cell membrane. The protein localises to the cytoplasm. It localises to the cytoskeleton. Regulates intracellular concentrations of taurine and glutamate. Negatively modulates SLC1A1/EAAC1 glutamate transport activity by decreasing its affinity for glutamate in a PKC activity-dependent manner. Plays a role in the retention of SLC1A1/EAAC1 in the endoplasmic reticulum. The chain is PRA1 family protein 3 (ARL6IP5) from Sus scrofa (Pig).